The sequence spans 381 residues: Alkanesulfonate monooxygenase (381 aa).

Belongs to the SsuD family. Homotetramer.

The catalysed reaction is an alkanesulfonate + FMNH2 + O2 = an aldehyde + FMN + sulfite + H2O + 2 H(+). Its function is as follows. Catalyzes the desulfonation of aliphatic sulfonates. In Escherichia coli O6:K15:H31 (strain 536 / UPEC), this protein is Alkanesulfonate monooxygenase.